A 442-amino-acid polypeptide reads, in one-letter code: tRNA modification GTPase MnmE (442 aa).

(6S)-5-formyl-5,6,7,8-tetrahydrofolate is bound by residues Arg-24, Glu-82, and Lys-122. In terms of domain architecture, TrmE-type G spans 219 to 366; that stretch reads GFKVALVGEP…LRRALKREIE (148 aa). Asn-229 contacts K(+). GTP-binding positions include 229–234, 248–254, and 273–276; these read NAGKST, TDIAGTT, and DTAG. Ser-233 contacts Mg(2+). Positions 248, 250, and 253 each coordinate K(+). Residue Thr-254 coordinates Mg(2+). A (6S)-5-formyl-5,6,7,8-tetrahydrofolate-binding site is contributed by Lys-442.

It belongs to the TRAFAC class TrmE-Era-EngA-EngB-Septin-like GTPase superfamily. TrmE GTPase family. As to quaternary structure, homodimer. Heterotetramer of two MnmE and two MnmG subunits. Requires K(+) as cofactor.

Its subcellular location is the cytoplasm. Exhibits a very high intrinsic GTPase hydrolysis rate. Involved in the addition of a carboxymethylaminomethyl (cmnm) group at the wobble position (U34) of certain tRNAs, forming tRNA-cmnm(5)s(2)U34. This is tRNA modification GTPase MnmE from Agrobacterium fabrum (strain C58 / ATCC 33970) (Agrobacterium tumefaciens (strain C58)).